Here is a 436-residue protein sequence, read N- to C-terminus: Adenylosuccinate synthetase (436 aa).

GTP-binding positions include 12–18 (GDEGKGK) and 40–42 (GHT). The Proton acceptor role is filled by D13. Mg(2+)-binding residues include D13 and G40. IMP-binding positions include 13–16 (DEGK), 38–41 (NAGH), T128, R142, Q223, T238, and R302. Catalysis depends on H41, which acts as the Proton donor. 298–304 (TTTGRRR) provides a ligand contact to substrate. Residues R304, 330–332 (KLD), and 412–414 (SLG) contribute to the GTP site.

Belongs to the adenylosuccinate synthetase family. As to quaternary structure, homodimer. It depends on Mg(2+) as a cofactor.

The protein resides in the cytoplasm. The enzyme catalyses IMP + L-aspartate + GTP = N(6)-(1,2-dicarboxyethyl)-AMP + GDP + phosphate + 2 H(+). It participates in purine metabolism; AMP biosynthesis via de novo pathway; AMP from IMP: step 1/2. Its function is as follows. Plays an important role in the de novo pathway of purine nucleotide biosynthesis. Catalyzes the first committed step in the biosynthesis of AMP from IMP. This is Adenylosuccinate synthetase from Prochlorococcus marinus (strain MIT 9301).